The following is an 88-amino-acid chain: Small ribosomal subunit protein bS16 (88 aa).

Belongs to the bacterial ribosomal protein bS16 family.

The protein is Small ribosomal subunit protein bS16 of Anaeromyxobacter dehalogenans (strain 2CP-1 / ATCC BAA-258).